The sequence spans 125 residues: Outer membrane protein assembly factor BamE (125 aa).

Residues 1 to 17 (MNKTLILALSALLGLAA) form the signal peptide. The N-palmitoyl cysteine moiety is linked to residue cysteine 18. A lipid anchor (S-diacylglycerol cysteine) is attached at cysteine 18.

It belongs to the BamE family. Part of the Bam complex.

Its subcellular location is the cell outer membrane. Functionally, part of the outer membrane protein assembly complex, which is involved in assembly and insertion of beta-barrel proteins into the outer membrane. The chain is Outer membrane protein assembly factor BamE from Neisseria meningitidis serogroup B (strain ATCC BAA-335 / MC58).